Reading from the N-terminus, the 368-residue chain is uncharacterized protein (368 aa).

This sequence belongs to the Gfo/Idh/MocA family.

This is an uncharacterized protein from Schizosaccharomyces pombe (strain 972 / ATCC 24843) (Fission yeast).